We begin with the raw amino-acid sequence, 179 residues long: Large ribosomal subunit protein uL5 (179 aa).

It belongs to the universal ribosomal protein uL5 family. Part of the 50S ribosomal subunit; part of the 5S rRNA/L5/L18/L25 subcomplex. Contacts the 5S rRNA and the P site tRNA. Forms a bridge to the 30S subunit in the 70S ribosome.

Its function is as follows. This is one of the proteins that bind and probably mediate the attachment of the 5S RNA into the large ribosomal subunit, where it forms part of the central protuberance. In the 70S ribosome it contacts protein S13 of the 30S subunit (bridge B1b), connecting the 2 subunits; this bridge is implicated in subunit movement. Contacts the P site tRNA; the 5S rRNA and some of its associated proteins might help stabilize positioning of ribosome-bound tRNAs. This chain is Large ribosomal subunit protein uL5, found in Aliivibrio salmonicida (strain LFI1238) (Vibrio salmonicida (strain LFI1238)).